The sequence spans 369 residues: Trichocyst matrix protein T1-B (369 aa).

The first 16 residues, 1–16 (MYKLAVCTLLILSVTA), serve as a signal peptide directing secretion. Positions 17-55 (IDVTNSVWTSHDQKAFAQIKQSGWGNFILNFGELHLQTG) are excised as a propeptide. Residues 56-180 (GILAELNTEI…AIDESLQLLS (125 aa)) are a coiled coil. Residues 190-225 (IQKVQKNLTKIQQSLKRHSTFQTFIKTLLEIAVEAN) constitute a propeptide that is removed on maturation. Positions 262–354 (KDFEARVIQL…AHQALDLLNQ (93 aa)) form a coiled coil.

The protein belongs to the TMP family. Post-translationally, two components are produced by post-translational processing from the precursor peptide.

Its subcellular location is the trichocyst. In terms of biological role, structural protein that crystallize inside the trichocyst matrix. The polypeptide is Trichocyst matrix protein T1-B (T1B) (Paramecium tetraurelia).